Here is a 301-residue protein sequence, read N- to C-terminus: Amylovoran biosynthesis glycosyltransferase AmsB (301 aa).

This sequence belongs to the glycosyltransferase 2 family.

Its pathway is glycan metabolism; exopolysaccharide biosynthesis. In terms of biological role, involved in the biosynthesis of amylovoran, which functions as a virulence factor. May function as a glycosyl transferase which transfers galactose from UDP-galactose to a lipid-linked amylovoran-subunit precursor. This Erwinia amylovora (Fire blight bacteria) protein is Amylovoran biosynthesis glycosyltransferase AmsB (amsB).